Consider the following 533-residue polypeptide: Protein mono-ADP-ribosyltransferase PARP3 (533 aa).

The disordered stretch occupies residues 1-30; the sequence is MAPKPKPWVQTEGPEKKKGRQAGREEDPFR. Residue K6 is modified to N6-(ADP-ribosyl)lysine. E12, E15, E26, and E34 each carry ADP-ribosyl glutamic acid. The Nuclear localization signal motif lies at 14–20; sequence PEKKKGR. K37 is subject to N6-(ADP-ribosyl)lysine. A WGR domain is found at 59 to 150; it reads GTQVYEDYNC…DHFVSHPGKY (92 aa). An ADP-ribosyl aspartic acid modification is found at D141. ADP-ribosyl glutamic acid is present on E163. The region spanning 182-300 is the PARP alpha-helical domain; that stretch reads PCSLDPATQK…DIELAQALQA (119 aa). ADP-ribosyl aspartic acid is present on D210. ADP-ribosyl glutamic acid occurs at positions 231, 309, 310, 344, and 449. The PARP catalytic domain occupies 313–533; that stretch reads HPLDRDYQLL…RLRYLLEVHL (221 aa). Residues 454-482 are disordered; it reads TDNPSLKSPPPGFDSVIARGHTEPDPTQD.

The protein belongs to the ARTD/PARP family. As to quaternary structure, interacts with PARP1; leading to activate PARP1 in absence of DNA. Interacts with PRKDC. Interacts with XRCC5/Ku80; the interaction is dependent on nucleic acids. Interacts with XRCC6/Ku70; the interaction is dependent on nucleic acids. Interacts with EZH2, HDAC1, HDAC2, SUZ12, YY1, LRIG3 and LIG4. Post-translationally, auto-mono-ADP-ribosylated. Widely expressed; the highest levels are in the kidney, skeletal muscle, liver, heart and spleen; also detected in pancreas, lung, placenta, brain, leukocytes, colon, small intestine, ovary, testis, prostate and thymus.

The protein localises to the nucleus. Its subcellular location is the chromosome. It is found in the cytoplasm. It localises to the cytoskeleton. The protein resides in the microtubule organizing center. The protein localises to the centrosome. Its subcellular location is the centriole. It carries out the reaction L-aspartyl-[protein] + NAD(+) = 4-O-(ADP-D-ribosyl)-L-aspartyl-[protein] + nicotinamide. The catalysed reaction is L-glutamyl-[protein] + NAD(+) = 5-O-(ADP-D-ribosyl)-L-glutamyl-[protein] + nicotinamide. It catalyses the reaction L-lysyl-[protein] + NAD(+) = N(6)-(ADP-D-ribosyl)-L-lysyl-[protein] + nicotinamide + H(+). Its activity is regulated as follows. Mono-ADP-ribosyltransferase activity of PARP3 is selectively inhibited by ME0328 compound; ME0328 does not inhibit other ARTD/PARP enzymes, such as PARP1. Mono-ADP-ribosyltransferase is strongly inhibited by KU0058948 compound. Mono-ADP-ribosyltransferase that mediates mono-ADP-ribosylation of target proteins and plays a key role in the response to DNA damage. Mediates mono-ADP-ribosylation of glutamate, aspartate or lysine residues on target proteins. In contrast to PARP1 and PARP2, it is not able to mediate poly-ADP-ribosylation. Involved in DNA repair by mediating mono-ADP-ribosylation of a limited number of acceptor proteins involved in chromatin architecture and in DNA metabolism, such as histone H2B, XRCC5 and XRCC6. ADP-ribosylation follows DNA damage and appears as an obligatory step in a detection/signaling pathway leading to the reparation of DNA strand breaks. Involved in single-strand break repair by catalyzing mono-ADP-ribosylation of histone H2B on 'Glu-2' (H2BE2ADPr) of nucleosomes containing nicked DNA. Cooperates with the XRCC5-XRCC6 (Ku80-Ku70) heterodimer to limit end-resection thereby promoting accurate NHEJ. Suppresses G-quadruplex (G4) structures in response to DNA damage. Associates with a number of DNA repair factors and is involved in the response to exogenous and endogenous DNA strand breaks. Together with APLF, promotes the retention of the LIG4-XRCC4 complex on chromatin and accelerate DNA ligation during non-homologous end-joining (NHEJ). May link the DNA damage surveillance network to the mitotic fidelity checkpoint. Acts as a negative regulator of immunoglobulin class switch recombination, probably by controlling the level of AICDA /AID on the chromatin. In addition to proteins, also able to ADP-ribosylate DNA: mediates DNA mono-ADP-ribosylation of DNA strand break termini via covalent addition of a single ADP-ribose moiety to a 5'- or 3'-terminal phosphate residues in DNA containing multiple strand breaks. This is Protein mono-ADP-ribosyltransferase PARP3 from Homo sapiens (Human).